The chain runs to 338 residues: MKLTFLGAGAWGTALASHAAAANDVVLWGRDPAQLAAIAATRENAAYLPGVTLSERLAVQADFEQAVAHAADDADGIVVVATPVAGLREMTRRLAARGARPVSMLWLCKGFESGTHLLPHQMVRAELDAAGRTEGFAYGVLTGPSFAREVALGLPCALTVAGNEPSLAERAQAAFHHHAMRIYGSDDLTGVEVGGAVKNVLAIATGASDGLGLGLNARAALVTRGLAEMTRLGLALGGRVETFMGLAGVGDLILTATGDLSRNRKVGQQLAAGQSLEQILAGLGHVAEGVRCAQAVAELASAYGVEMPIARAVCAVLFDGLSAADAVAQLLQRDARDE.

The NADPH site is built by Trp11, Arg30, and Lys109. The sn-glycerol 3-phosphate site is built by Lys109, Gly143, and Ser145. Residue Ala147 participates in NADPH binding. The sn-glycerol 3-phosphate site is built by Lys198, Asp251, Ser261, Arg262, and Asn263. The active-site Proton acceptor is Lys198. Arg262 is a binding site for NADPH. 2 residues coordinate NADPH: Val286 and Glu288.

Belongs to the NAD-dependent glycerol-3-phosphate dehydrogenase family.

The protein resides in the cytoplasm. The enzyme catalyses sn-glycerol 3-phosphate + NAD(+) = dihydroxyacetone phosphate + NADH + H(+). It carries out the reaction sn-glycerol 3-phosphate + NADP(+) = dihydroxyacetone phosphate + NADPH + H(+). Its pathway is membrane lipid metabolism; glycerophospholipid metabolism. Its function is as follows. Catalyzes the reduction of the glycolytic intermediate dihydroxyacetone phosphate (DHAP) to sn-glycerol 3-phosphate (G3P), the key precursor for phospholipid synthesis. The polypeptide is Glycerol-3-phosphate dehydrogenase [NAD(P)+] (Cupriavidus necator (strain ATCC 17699 / DSM 428 / KCTC 22496 / NCIMB 10442 / H16 / Stanier 337) (Ralstonia eutropha)).